The chain runs to 276 residues: UPF0276 protein Caul_0757 (276 aa).

The protein belongs to the UPF0276 family.

The chain is UPF0276 protein Caul_0757 from Caulobacter sp. (strain K31).